We begin with the raw amino-acid sequence, 35 residues long: Small toxic polypeptide LdrB (35 aa).

The helical transmembrane segment at Phe-10–Trp-30 threads the bilayer.

It belongs to the Ldr toxic peptide family.

The protein localises to the cell inner membrane. In terms of biological role, toxic component of a type I toxin-antitoxin (TA) system. Overexpression causes rapid cell killing, probably by disrupting the cell inner membrane and disruption of ATP synthesis. The polypeptide is Small toxic polypeptide LdrB (ldrB) (Escherichia coli (strain K12)).